A 452-amino-acid chain; its full sequence is Pup--protein ligase (452 aa).

Glu9 is a binding site for Mg(2+). Arg53 lines the ATP pocket. A Mg(2+)-binding site is contributed by Tyr55. Asp57 functions as the Proton acceptor in the catalytic mechanism. Glu63 is a binding site for Mg(2+). Residues Thr66 and Trp419 each coordinate ATP.

The protein belongs to the Pup ligase/Pup deamidase family. Pup-conjugating enzyme subfamily.

The enzyme catalyses ATP + [prokaryotic ubiquitin-like protein]-L-glutamate + [protein]-L-lysine = ADP + phosphate + N(6)-([prokaryotic ubiquitin-like protein]-gamma-L-glutamyl)-[protein]-L-lysine.. It participates in protein degradation; proteasomal Pup-dependent pathway. The protein operates within protein modification; protein pupylation. In terms of biological role, catalyzes the covalent attachment of the prokaryotic ubiquitin-like protein modifier Pup to the proteasomal substrate proteins, thereby targeting them for proteasomal degradation. This tagging system is termed pupylation. The ligation reaction involves the side-chain carboxylate of the C-terminal glutamate of Pup and the side-chain amino group of a substrate lysine. This chain is Pup--protein ligase, found in Parafrankia sp. (strain EAN1pec).